Reading from the N-terminus, the 128-residue chain is Fumarate reductase subunit C (128 aa).

Helical transmembrane passes span 31-51, 67-87, and 106-126; these read ATCIATIWFCLVLLYGVISLG, VVILNIISLAGLLYHAATLYV, and ILKNALWAITGLVSLLALVLV.

The protein belongs to the FrdC family. Part of an enzyme complex containing four subunits: a flavoprotein (FrdA), an iron-sulfur protein (FrdB), and two hydrophobic anchor proteins (FrdC and FrdD).

The protein resides in the cell inner membrane. In terms of biological role, anchors the catalytic components of the fumarate reductase complex to the cell membrane, binds quinones. This Haemophilus ducreyi (strain 35000HP / ATCC 700724) protein is Fumarate reductase subunit C.